A 287-amino-acid polypeptide reads, in one-letter code: Light-independent protochlorophyllide reductase iron-sulfur ATP-binding protein (287 aa).

Residues glycine 10–threonine 15 and lysine 39 contribute to the ATP site. Serine 14 contacts Mg(2+). Residues cysteine 95 and cysteine 129 each contribute to the [4Fe-4S] cluster site. Residue asparagine 180 to arginine 181 coordinates ATP.

Belongs to the NifH/BchL/ChlL family. Homodimer. Protochlorophyllide reductase is composed of three subunits; ChlL, ChlN and ChlB. It depends on [4Fe-4S] cluster as a cofactor.

Its subcellular location is the plastid. It localises to the chloroplast. It carries out the reaction chlorophyllide a + oxidized 2[4Fe-4S]-[ferredoxin] + 2 ADP + 2 phosphate = protochlorophyllide a + reduced 2[4Fe-4S]-[ferredoxin] + 2 ATP + 2 H2O. It participates in porphyrin-containing compound metabolism; chlorophyll biosynthesis (light-independent). Its function is as follows. Component of the dark-operative protochlorophyllide reductase (DPOR) that uses Mg-ATP and reduced ferredoxin to reduce ring D of protochlorophyllide (Pchlide) to form chlorophyllide a (Chlide). This reaction is light-independent. The L component serves as a unique electron donor to the NB-component of the complex, and binds Mg-ATP. The sequence is that of Light-independent protochlorophyllide reductase iron-sulfur ATP-binding protein from Nephroselmis olivacea (Green alga).